A 417-amino-acid chain; its full sequence is Gamma-glutamyl phosphate reductase (417 aa).

Belongs to the gamma-glutamyl phosphate reductase family.

It localises to the cytoplasm. It carries out the reaction L-glutamate 5-semialdehyde + phosphate + NADP(+) = L-glutamyl 5-phosphate + NADPH + H(+). It participates in amino-acid biosynthesis; L-proline biosynthesis; L-glutamate 5-semialdehyde from L-glutamate: step 2/2. In terms of biological role, catalyzes the NADPH-dependent reduction of L-glutamate 5-phosphate into L-glutamate 5-semialdehyde and phosphate. The product spontaneously undergoes cyclization to form 1-pyrroline-5-carboxylate. In Escherichia coli O6:K15:H31 (strain 536 / UPEC), this protein is Gamma-glutamyl phosphate reductase.